Reading from the N-terminus, the 343-residue chain is Fc receptor-like protein 1 (343 aa).

A signal peptide spans 1 to 16 (MLPWLLLLICALPCEP). 2 consecutive Ig-like C2-type domains span residues 17 to 109 (AGIS…VSIH) and 117 to 200 (PVLT…EVVA). Over 17–219 (AGISDVSLKT…PTENGISHLS (203 aa)) the chain is Extracellular. Asn51 is a glycosylation site (N-linked (GlcNAc...) asparagine). Cys138 and Cys185 are joined by a disulfide. Residue Asn202 is glycosylated (N-linked (GlcNAc...) asparagine). Residues 220–240 (LGLTGWLLGCLSPITMALIFC) form a helical membrane-spanning segment. The Cytoplasmic segment spans residues 241-343 (YWLKRKIGRQ…IAHMDYEDAM (103 aa)). Residues 251–278 (SEDPVRSPPQTVLQGSTYPKSPDSRQPE) are disordered. Over residues 258–269 (PPQTVLQGSTYP) the composition is skewed to polar residues. Short sequence motifs (ITIM motif) lie at residues 266 to 271 (STYPKS), 279 to 284 (PLYENV), and 291 to 296 (EVYSLV). At Tyr281 the chain carries Phosphotyrosine. Tyr297 is subject to Phosphotyrosine. 2 short sequence motifs (ITIM motif) span residues 325 to 330 (GLYSKP) and 337 to 342 (MDYEDA).

As to quaternary structure, interacts with ABL1. Interacts with GRB2 and SOS1. Interacts with SHIP-1/INPP5D. In terms of processing, phosphorylated on C-terminal region upon BCR ligation leading to recruitment of ABL1. Widely expressed. Expressed in B-cells at the various stages of differentiation.

It is found in the cell membrane. In terms of biological role, may function as an activating coreceptor in B-cells. May function in B-cells activation and differentiation. The polypeptide is Fc receptor-like protein 1 (Fcrl1) (Mus musculus (Mouse)).